Reading from the N-terminus, the 266-residue chain is Glucosamine-6-phosphate deaminase (266 aa).

The Proton acceptor; for enolization step role is filled by D72. D141 (for ring-opening step) is an active-site residue. The active-site Proton acceptor; for ring-opening step is the H143. The active-site For ring-opening step is E148.

This sequence belongs to the glucosamine/galactosamine-6-phosphate isomerase family. NagB subfamily. As to quaternary structure, homohexamer.

The enzyme catalyses alpha-D-glucosamine 6-phosphate + H2O = beta-D-fructose 6-phosphate + NH4(+). It functions in the pathway amino-sugar metabolism; N-acetylneuraminate degradation; D-fructose 6-phosphate from N-acetylneuraminate: step 5/5. With respect to regulation, allosterically activated by N-acetylglucosamine 6-phosphate (GlcNAc6P). Functionally, catalyzes the reversible isomerization-deamination of glucosamine 6-phosphate (GlcN6P) to form fructose 6-phosphate (Fru6P) and ammonium ion. This chain is Glucosamine-6-phosphate deaminase, found in Yersinia pseudotuberculosis serotype O:1b (strain IP 31758).